A 449-amino-acid chain; its full sequence is Hyaluronidase-3 (449 aa).

The first 23 residues, Met-1–Val-23, serve as a signal peptide directing secretion. Cystine bridges form between Cys-47–Cys-340 and Cys-211–Cys-227. 3 N-linked (GlcNAc...) asparagine glycosylation sites follow: Asn-67, Asn-103, and Asn-111. Glu-135 (proton donor) is an active-site residue. A glycan (N-linked (GlcNAc...) asparagine) is linked at Asn-153. A glycan (N-linked (GlcNAc...) asparagine) is linked at Asn-357. Cystine bridges form between Cys-365–Cys-376, Cys-370–Cys-427, and Cys-429–Cys-438. Asn-401 is a glycosylation site (N-linked (GlcNAc...) asparagine). In terms of domain architecture, EGF-like spans Cys-427–Cys-438.

This sequence belongs to the glycosyl hydrolase 56 family. Monomer. In terms of tissue distribution, expressed by the venom gland.

It localises to the secreted. The enzyme catalyses Random hydrolysis of (1-&gt;4)-linkages between N-acetyl-beta-D-glucosamine and D-glucuronate residues in hyaluronate.. Functionally, snake venom endo-hyaluronidase that degrades hyaluronan to smaller oligosaccharide fragments. In venom, it is not toxic by itself, but increases the diffusion of other venom proteins by degrading the extracellular matrix. In addition, it displays antiedematogenic activity. This Cerastes cerastes (Horned desert viper) protein is Hyaluronidase-3.